The sequence spans 88 residues: MTTIRSDDLSNQITQISGSSKKEEEKKKQQMLTGVLGLQPNMASHPVLGVFLPKYAKQNGGNVDKTAFRLDLIRMLALHRLNTKTGSD.

The disordered stretch occupies residues 1 to 30 (MTTIRSDDLSNQITQISGSSKKEEEKKKQQ). Positions 9–19 (LSNQITQISGS) are enriched in polar residues.

This sequence belongs to the herpesviridae small capsomere-interacting protein family. In terms of assembly, interacts with the major capsid protein/MCP.

The protein localises to the virion. Its subcellular location is the host nucleus. Participates in the assembly of the infectious particles by decorating the outer surface of the capsid shell and thus forming a layer between the capsid and the tegument. Complexes composed of the major capsid protein and small capsomere-interacting protein/SCP assemble together in the host cytoplasm and are translocated to the nucleus, where they accumulate and participate in capsid assembly. In Human herpesvirus 6A (strain Uganda-1102) (HHV-6 variant A), this protein is Small capsomere-interacting protein.